A 96-amino-acid polypeptide reads, in one-letter code: SPAALQSSSFGSAGFGSTNFGSSGFGPSLGSTGFGSAGFASPGFGSPSLGSAAFGSSSFGSPSLGSTGFGSSSFGSTSGLPYLVVIPNNPAVGGLR.

9 tandem repeats follow at residues 11–15, 16–20, 21–25, 30–34, 35–39, 50–54, 55–59, 65–69, and 70–74. Positions 11–74 are 9 X 5 AA tandem repeat of G-S-X-X-F; that stretch reads GSAGFGSTNF…GSTGFGSSSF (64 aa). Positions 75-96 are disordered; that stretch reads GSTSGLPYLVVIPNNPAVGGLR.

Post-translationally, the N-terminus is blocked. As to expression, expressed in the gastroliths.

Its subcellular location is the secreted. In terms of biological role, associates with chitin and plays a role in calcification. The protein is Gastrolith matrix protein of Procambarus clarkii (Red swamp crayfish).